A 37-amino-acid polypeptide reads, in one-letter code: Large ribosomal subunit protein bL36 (37 aa).

The protein belongs to the bacterial ribosomal protein bL36 family.

The protein is Large ribosomal subunit protein bL36 of Azoarcus sp. (strain BH72).